We begin with the raw amino-acid sequence, 698 residues long: Sialic acid-binding Ig-like lectin 11 (698 aa).

A signal peptide spans 1 to 27 (MVPGQAQPQSPEMLLLPLLLPVLGAGS). The Extracellular segment spans residues 28–561 (LNKDPSYSLQ…KLEHGGGLGL (534 aa)). The Ig-like V-type domain occupies 31-134 (DPSYSLQVQR…DEAWYFFRVE (104 aa)). Disulfide bonds link Cys-49-Cys-186, Cys-54-Cys-114, and Cys-177-Cys-228. 2 N-linked (GlcNAc...) asparagine glycosylation sites follow: Asn-55 and Asn-90. Arg-132 is a binding site for N-acetylneuraminate. 3 consecutive Ig-like C2-type domains span residues 159–244 (PDVY…RTVR), 251–350 (PKDL…LDLS), and 355–452 (PENL…LSLS). Residue Asn-262 is glycosylated (N-linked (GlcNAc...) asparagine). An intrachain disulfide couples Cys-287 to Cys-334. N-linked (GlcNAc...) asparagine glycans are attached at residues Asn-366 and Asn-375. Cys-391 and Cys-436 are disulfide-bonded. Residues Asn-497 and Asn-515 are each glycosylated (N-linked (GlcNAc...) asparagine). A helical membrane pass occupies residues 562 to 584 (GAALGAGVAALLAFCSCLVVFRV). At 585 to 698 (KICRKEARKR…EREMSGMVPK (114 aa)) the chain is on the cytoplasmic side. The segment at 596-635 (AAEQDVPSTLGPISQGHQHECSAGSSQDHPPPGAATYTPG) is disordered. An ITIM motif motif is present at residues 642-647 (LHYASL). A Phosphotyrosine modification is found at Tyr-668. A disordered region spans residues 675–698 (TGQPLRGPGFGLQLEREMSGMVPK).

It belongs to the immunoglobulin superfamily. SIGLEC (sialic acid binding Ig-like lectin) family. Interacts with PTPN6/SHP-1 and PTPN11/SHP-2 upon phosphorylation. Post-translationally, phosphorylated on tyrosine residues. In terms of tissue distribution, expressed by macrophages in various tissues including Kupffer cells. Also found in brain microglia.

It is found in the membrane. Putative adhesion molecule that mediates sialic-acid dependent binding to cells. Preferentially binds to alpha-2,8-linked sialic acid. The sialic acid recognition site may be masked by cis interactions with sialic acids on the same cell surface. In the immune response, may act as an inhibitory receptor upon ligand induced tyrosine phosphorylation by recruiting cytoplasmic phosphatase(s) via their SH2 domain(s) that block signal transduction through dephosphorylation of signaling molecules. In Homo sapiens (Human), this protein is Sialic acid-binding Ig-like lectin 11 (SIGLEC11).